Reading from the N-terminus, the 268-residue chain is UPF0328 protein ECU05_1640/ECU11_0090 (268 aa).

It belongs to the UPF0328 family.

The protein is UPF0328 protein ECU05_1640/ECU11_0090 of Encephalitozoon cuniculi (strain GB-M1) (Microsporidian parasite).